Reading from the N-terminus, the 217-residue chain is Large ribosomal subunit protein uL3 (217 aa).

The tract at residues 137-160 (VSASHGSHRNHRKPGSIGASSTPS) is disordered.

The protein belongs to the universal ribosomal protein uL3 family. Part of the 50S ribosomal subunit. Forms a cluster with proteins L14 and L19.

Functionally, one of the primary rRNA binding proteins, it binds directly near the 3'-end of the 23S rRNA, where it nucleates assembly of the 50S subunit. The polypeptide is Large ribosomal subunit protein uL3 (Clavibacter michiganensis subsp. michiganensis (strain NCPPB 382)).